Here is a 465-residue protein sequence, read N- to C-terminus: MPYFSRLILFLFCLVVLVESRKPKKRRWTGQLETSKPSHLYKKNPDMTKIRHGKPQPLLRVDDHDFTMRPAFGGPAIPVGVDVQVESLDSISEVDMDFTMTLYLRHYWKDERLAFPSASNKSMTFDGRLVKKIWVPDVFFVHSKRSFIHDTTTDNIMLRVFPDGQVLYSMRITVTAMCNMDFSHFPLDSQTCSLELESYAYTDEDLMLYWKNGDESLKTDEKISLSQFLIQKFHTTSRLAFYSSTGWYNRLYINFTLRRHIFFFLLQTYFPATLMVMLSWVSFWIDRRAVPARVSLGITTVLTMSTIITGVNASMPRVSYIKAVDIYLWVSFVFVFLSVLEYAAVNYLTTVQERKERKLQEKFPCMCGMLHSRTMMLDGSYSESEANSLAGYPRSHILPEEERQDKIVVHLALSNESSSSRKKGLLKGQVGLRIFQNTHAIDKYSRLIFPASYIFFNLIYWSVFA.

The first 20 residues, 1–20, serve as a signal peptide directing secretion; the sequence is MPYFSRLILFLFCLVVLVES. Topologically, residues 21-260 are extracellular; sequence RKPKKRRWTG…LYINFTLRRH (240 aa). Arginine 105 provides a ligand contact to 4-aminobutanoate. Asparagine 120 carries N-linked (GlcNAc...) asparagine glycosylation. Serine 169 is a 4-aminobutanoate binding site. Cysteine 178 and cysteine 192 are oxidised to a cystine. Glutamate 197 lines the 4-aminobutanoate pocket. Asparagine 254 carries N-linked (GlcNAc...) asparagine glycosylation. The chain crosses the membrane as a helical span at residues 261 to 281; sequence IFFFLLQTYFPATLMVMLSWV. Topologically, residues 282-293 are cytoplasmic; it reads SFWIDRRAVPAR. Residues 294 to 314 form a helical membrane-spanning segment; the sequence is VSLGITTVLTMSTIITGVNAS. Topologically, residues 315–325 are extracellular; the sequence is MPRVSYIKAVD. Residues 326–346 form a helical membrane-spanning segment; the sequence is IYLWVSFVFVFLSVLEYAAVN. The Cytoplasmic portion of the chain corresponds to 347 to 444; the sequence is YLTTVQERKE…FQNTHAIDKY (98 aa). A helical transmembrane segment spans residues 445–465; that stretch reads SRLIFPASYIFFNLIYWSVFA.

The protein belongs to the ligand-gated ion channel (TC 1.A.9) family. Gamma-aminobutyric acid receptor (TC 1.A.9.5) subfamily. GABRR2 sub-subfamily. Three rho subunits (rho-1/GBRR1, rho-2/GBRR2 and rho-3/GBRR3) coassemble either to form functional homopentamers or heteropentamers. Rho-2 is unable to form a functional homopentamer. Interacts with SQSTM1.

Its subcellular location is the postsynaptic cell membrane. The protein localises to the cell membrane. It catalyses the reaction chloride(in) = chloride(out). In terms of biological role, rho subunit of the pentameric ligand-gated chloride channels responsible for mediating the effects of gamma-aminobutyric acid (GABA), the major inhibitory neurotransmitter in the brain. Rho-containing GABA-gated chloride channels are a subclass of GABA(A) receptors (GABAARs) entirely composed of rho subunits, where GABA molecules bind at the rho intersubunit interfaces. When activated by GABA, rho-GABAARs selectively allow the flow of chloride anions across the cell membrane down their electrochemical gradient. Rho-2 GABAARs may contribute to the regulation of glial development in the cerebellum by controlling extrasynaptic transmission. Rho-2 GABAARs are also involved in neuronal tonic (extrasynaptic) and phasic (synaptic) transmission in the Purkinje neurons of the cerebellum. Rho-2 GABAARs expressed in retina may play a role in retinal neurotransmission. The polypeptide is Gamma-aminobutyric acid receptor subunit rho-2 (GABRR2) (Bos taurus (Bovine)).